We begin with the raw amino-acid sequence, 51 residues long: Large ribosomal subunit protein eL39 (51 aa).

This sequence belongs to the eukaryotic ribosomal protein eL39 family. As to quaternary structure, component of the large ribosomal subunit. Interacts with IMPACT.

The protein localises to the cytoplasm. Functionally, RNA-binding component of the large ribosomal subunit. The ribosome is a large ribonucleoprotein complex responsible for the synthesis of proteins in the cell. The polypeptide is Large ribosomal subunit protein eL39 (Rpl39) (Mus musculus (Mouse)).